A 152-amino-acid chain; its full sequence is MFRGVTSISIDNKGRIAIPTRYRAELREQHEGVLVCTVDIRQPCLLLYPLHEWETVEQKLLALSNFEPMQRRIQRVMQGFATECEMDAAGRILLSPTLRQHAQLEQQIMLVGQLNKFEIWQDKQWQSQIAEDLALGGSAEMLNCEALKNLSL.

SpoVT-AbrB domains are found at residues 5–52 (VTSI…PLHE) and 81–124 (ATEC…QDKQ).

The protein belongs to the MraZ family. Forms oligomers.

The protein localises to the cytoplasm. The protein resides in the nucleoid. This chain is Transcriptional regulator MraZ, found in Actinobacillus pleuropneumoniae serotype 5b (strain L20).